The chain runs to 83 residues: Large ribosomal subunit protein bL31B (83 aa).

Belongs to the bacterial ribosomal protein bL31 family. Type B subfamily. Part of the 50S ribosomal subunit.

This chain is Large ribosomal subunit protein bL31B, found in Levilactobacillus brevis (strain ATCC 367 / BCRC 12310 / CIP 105137 / JCM 1170 / LMG 11437 / NCIMB 947 / NCTC 947) (Lactobacillus brevis).